The following is a 1030-amino-acid chain: Carbamoyl phosphate synthase arginine-specific large chain (1030 aa).

Residues 1–401 (MPKDTSISSI…AIQKAAASLE (401 aa)) are carboxyphosphate synthetic domain. 12 residues coordinate ATP: Arg-129, Arg-169, Gly-175, Gly-176, Lys-208, Ile-210, Glu-215, Gly-241, Val-242, His-243, Gln-284, and Glu-298. The region spanning 133 to 327 (RSLMNELKQP…IAKMAAKLAV (195 aa)) is the ATP-grasp 1 domain. The Mg(2+) site is built by Gln-284, Glu-298, and Asn-300. Residues Gln-284, Glu-298, and Asn-300 each coordinate Mn(2+). The tract at residues 402-548 (LKNIGTHLPE…YSTYFGETDG (147 aa)) is oligomerization domain. A carbamoyl phosphate synthetic domain region spans residues 549-928 (DISRKEKKRA…ALKKIYTRVW (380 aa)). The ATP-grasp 2 domain occupies 675–863 (YQLLDELGLK…MIPLATRLLA (189 aa)). Residues Arg-711, Gln-748, Val-750, Glu-754, Gly-779, Val-780, His-781, Ser-782, Gln-822, and Glu-834 each contribute to the ATP site. Residues Gln-822, Glu-834, and Asn-836 each coordinate Mg(2+). Mn(2+) is bound by residues Gln-822, Glu-834, and Asn-836. The 103-residue stretch at 925–1027 (TRVWSQKGSI…KDLYKKEVAS (103 aa)) folds into the MGS-like domain. The tract at residues 929–1030 (SQKGSIYLQN…YKKEVASCTQ (102 aa)) is allosteric domain.

It belongs to the CarB family. In terms of assembly, composed of two chains; the small (or glutamine) chain promotes the hydrolysis of glutamine to ammonia, which is used by the large (or ammonia) chain to synthesize carbamoyl phosphate. Tetramer of heterodimers (alpha,beta)4. Mg(2+) is required as a cofactor. Requires Mn(2+) as cofactor.

It carries out the reaction hydrogencarbonate + L-glutamine + 2 ATP + H2O = carbamoyl phosphate + L-glutamate + 2 ADP + phosphate + 2 H(+). The enzyme catalyses hydrogencarbonate + NH4(+) + 2 ATP = carbamoyl phosphate + 2 ADP + phosphate + 2 H(+). Its pathway is amino-acid biosynthesis; L-arginine biosynthesis; carbamoyl phosphate from bicarbonate: step 1/1. Large subunit of the glutamine-dependent carbamoyl phosphate synthetase (CPSase). CPSase catalyzes the formation of carbamoyl phosphate from the ammonia moiety of glutamine, carbonate, and phosphate donated by ATP, constituting the first step of the biosynthetic pathway leading to arginine and/or urea. The large subunit (synthetase) binds the substrates ammonia (free or transferred from glutamine from the small subunit), hydrogencarbonate and ATP and carries out an ATP-coupled ligase reaction, activating hydrogencarbonate by forming carboxy phosphate which reacts with ammonia to form carbamoyl phosphate. In Bacillus subtilis (strain 168), this protein is Carbamoyl phosphate synthase arginine-specific large chain.